Consider the following 151-residue polypeptide: Transcriptional repressor NrdR (151 aa).

Residues 3 to 34 (CPYCAYGESKVVDSRSTEDGSSIRRRRECLKC) fold into a zinc finger. The ATP-cone domain maps to 49–139 (ILVIKKNMSR…VYRQFKDINT (91 aa)).

Belongs to the NrdR family. It depends on Zn(2+) as a cofactor.

Negatively regulates transcription of bacterial ribonucleotide reductase nrd genes and operons by binding to NrdR-boxes. This chain is Transcriptional repressor NrdR, found in Clostridium botulinum (strain ATCC 19397 / Type A).